Here is a 549-residue protein sequence, read N- to C-terminus: Cytoplasmic trehalase (549 aa).

Residues arginine 168, 175-176 (WD), asparagine 212, 221-223 (RSQ), 292-294 (RDE), and glycine 324 each bind substrate. Catalysis depends on proton donor/acceptor residues aspartate 326 and glutamate 509. Glutamate 525 provides a ligand contact to substrate.

It belongs to the glycosyl hydrolase 37 family. As to quaternary structure, monomer.

It is found in the cytoplasm. It carries out the reaction alpha,alpha-trehalose + H2O = alpha-D-glucose + beta-D-glucose. It functions in the pathway glycan degradation; trehalose degradation; D-glucose from alpha,alpha-trehalose: step 1/1. Its function is as follows. Hydrolyzes trehalose to glucose. Could be involved, in cells returning to low osmolarity conditions, in the utilization of the accumulated cytoplasmic trehalose, which was synthesized in response to high osmolarity. The chain is Cytoplasmic trehalase from Salmonella schwarzengrund (strain CVM19633).